The chain runs to 247 residues: MPTTTRSSIPEHVAIIMDGNGRWAKQRGLPRVMGHRRGVEAVRETVRAAGDCGISYLTLFAFSSENWRRPESEVSDLMGLLKAFIRRDLAELHRENVRVRIIGDRQGLKTDIRSLLEEAEQMTAGNTKLTLVIAFNYGSRDEITRATASIARDVAEGRLSADAITPEMISSRLDTSGMPDPDLIIRTSGEERLSNFLLWQAAYSEFLFVPEYWPDFDRQRFFSAIEQYATRDRRFGALAEQVAVAGA.

The active site involves D18. D18 is a binding site for Mg(2+). Residues 19–22, W23, R31, H35, and 63–65 contribute to the substrate site; these read GNGR and SSE. The active-site Proton acceptor is the N66. Substrate is bound by residues W67, R69, R186, and 192-194; that span reads RLS. E205 provides a ligand contact to Mg(2+).

It belongs to the UPP synthase family. In terms of assembly, homodimer. It depends on Mg(2+) as a cofactor.

Catalyzes the condensation of isopentenyl diphosphate (IPP) with allylic pyrophosphates generating different type of terpenoids. This chain is Isoprenyl transferase, found in Agrobacterium fabrum (strain C58 / ATCC 33970) (Agrobacterium tumefaciens (strain C58)).